Here is a 465-residue protein sequence, read N- to C-terminus: Probable glycine dehydrogenase (decarboxylating) subunit 1 (465 aa).

The protein belongs to the GcvP family. N-terminal subunit subfamily. In terms of assembly, the glycine cleavage system is composed of four proteins: P, T, L and H. In this organism, the P 'protein' is a heterodimer of two subunits.

It catalyses the reaction N(6)-[(R)-lipoyl]-L-lysyl-[glycine-cleavage complex H protein] + glycine + H(+) = N(6)-[(R)-S(8)-aminomethyldihydrolipoyl]-L-lysyl-[glycine-cleavage complex H protein] + CO2. Its function is as follows. The glycine cleavage system catalyzes the degradation of glycine. The P protein binds the alpha-amino group of glycine through its pyridoxal phosphate cofactor; CO(2) is released and the remaining methylamine moiety is then transferred to the lipoamide cofactor of the H protein. The polypeptide is Probable glycine dehydrogenase (decarboxylating) subunit 1 (Aeropyrum pernix (strain ATCC 700893 / DSM 11879 / JCM 9820 / NBRC 100138 / K1)).